The chain runs to 521 residues: Probable feruloyl esterase B (521 aa).

An N-terminal signal peptide occupies residues 1 to 17 (MKVSSLLSVALPGAALA). 2 disulfide bridges follow: Cys26–Cys72 and Cys61–Cys111. N-linked (GlcNAc...) asparagine glycans are attached at residues Asn37, Asn51, Asn77, Asn95, Asn144, and Asn177. 3 disulfide bridges follow: Cys184/Cys438, Cys253/Cys270, and Cys279/Cys288. The active-site Acyl-ester intermediate is the Ser185. Ca(2+) contacts are provided by Asp254, Asp257, Ala259, Asp261, and Ile263. N-linked (GlcNAc...) asparagine glycosylation is found at Asn284, Asn347, Asn352, and Asn378. Residues Asp397 and His437 each act as charge relay system in the active site. N-linked (GlcNAc...) asparagine glycans are attached at residues Asn488 and Asn511. The cysteines at positions 498 and 520 are disulfide-linked.

This sequence belongs to the tannase family.

It is found in the secreted. The catalysed reaction is feruloyl-polysaccharide + H2O = ferulate + polysaccharide.. Functionally, involved in degradation of plant cell walls. Hydrolyzes the feruloyl-arabinose ester bond in arabinoxylans as well as the feruloyl-galactose and feruloyl-arabinose ester bonds in pectin. The sequence is that of Probable feruloyl esterase B (faeB) from Aspergillus niger (strain ATCC MYA-4892 / CBS 513.88 / FGSC A1513).